The following is a 493-amino-acid chain: UDP-glucose 6-dehydrogenase (493 aa).

NAD(+) is bound by residues 11–16 (GAGYVG), Asp36, Arg41, and 89–93 (VNTPT). Residues 88-110 (SVNTPTKTYGMGKGRAADLKYIE) are disordered. N6-acetyllysine is present on Lys107. The segment at 129 to 135 (KSTVPVR) is allosteric switch region. 130–132 (STV) contacts NAD(+). The active-site Proton donor/acceptor is the Glu161. Substrate is bound by residues 161–165 (EFLAE), 220–224 (KLAAN), Arg260, and 267–273 (KASVGFG). Glu165 contributes to the NAD(+) binding site. Lys220 acts as the Proton donor/acceptor in catalysis. The active-site Nucleophile is Cys276. 276–279 (CFQK) provides a ligand contact to NAD(+). Residues 321–325 (SLFNT) form an important for formation of active hexamer structure region. Position 338 to 339 (338 to 339 (FK)) interacts with substrate. Position 346 (Arg346) interacts with NAD(+). Position 442 (Arg442) interacts with substrate. A disordered region spans residues 466–493 (VSSKRIPYTPGEIPKFSLQDPPNKKPKV). Residue Thr474 is modified to Phosphothreonine.

It belongs to the UDP-glucose/GDP-mannose dehydrogenase family. Homohexamer.

The enzyme catalyses UDP-alpha-D-glucose + 2 NAD(+) + H2O = UDP-alpha-D-glucuronate + 2 NADH + 3 H(+). It functions in the pathway nucleotide-sugar biosynthesis; UDP-alpha-D-glucuronate biosynthesis; UDP-alpha-D-glucuronate from UDP-alpha-D-glucose: step 1/1. With respect to regulation, UDP-alpha-D-xylose (UDX) acts as a feedback inhibitor. It binds at the same site as the substrate, but functions as allosteric inhibitor by triggering a conformation change that disrupts the active hexameric ring structure and gives rise to an inactive, horseshoe-shaped hexamer. In terms of biological role, catalyzes the formation of UDP-alpha-D-glucuronate, a constituent of complex glycosaminoglycans. Required for the biosynthesis of chondroitin sulfate and heparan sulfate. Required for embryonic development via its role in the biosynthesis of glycosaminoglycans. Required for proper brain and neuronal development. The sequence is that of UDP-glucose 6-dehydrogenase (Ugdh) from Mus musculus (Mouse).